A 372-amino-acid chain; its full sequence is Alanine racemase (372 aa).

The Proton acceptor; specific for D-alanine role is filled by K41. K41 is modified (N6-(pyridoxal phosphate)lysine). A substrate-binding site is contributed by R139. Y268 serves as the catalytic Proton acceptor; specific for L-alanine. M316 is a binding site for substrate.

The protein belongs to the alanine racemase family. Pyridoxal 5'-phosphate is required as a cofactor.

The enzyme catalyses L-alanine = D-alanine. It functions in the pathway amino-acid biosynthesis; D-alanine biosynthesis; D-alanine from L-alanine: step 1/1. Functionally, catalyzes the interconversion of L-alanine and D-alanine. May also act on other amino acids. This chain is Alanine racemase (alr), found in Borreliella burgdorferi (strain ATCC 35210 / DSM 4680 / CIP 102532 / B31) (Borrelia burgdorferi).